A 284-amino-acid chain; its full sequence is D-tagatose-1,6-bisphosphate aldolase subunit GatY (284 aa).

Aspartate 82 functions as the Proton donor in the catalytic mechanism. Zn(2+)-binding residues include histidine 83 and histidine 180. Residue glycine 181 coordinates dihydroxyacetone phosphate. A Zn(2+)-binding site is contributed by histidine 208. Residues 209-211 (GAS) and 230-233 (NVAT) contribute to the dihydroxyacetone phosphate site.

This sequence belongs to the class II fructose-bisphosphate aldolase family. TagBP aldolase GatY subfamily. As to quaternary structure, forms a complex with GatZ. Requires Zn(2+) as cofactor.

It carries out the reaction D-tagatofuranose 1,6-bisphosphate = D-glyceraldehyde 3-phosphate + dihydroxyacetone phosphate. The protein operates within carbohydrate metabolism; D-tagatose 6-phosphate degradation; D-glyceraldehyde 3-phosphate and glycerone phosphate from D-tagatose 6-phosphate: step 2/2. Catalytic subunit of the tagatose-1,6-bisphosphate aldolase GatYZ, which catalyzes the reversible aldol condensation of dihydroxyacetone phosphate (DHAP or glycerone-phosphate) with glyceraldehyde 3-phosphate (G3P) to produce tagatose 1,6-bisphosphate (TBP). Requires GatZ subunit for full activity and stability. Is involved in the catabolism of galactitol. The polypeptide is D-tagatose-1,6-bisphosphate aldolase subunit GatY (gatY) (Escherichia coli).